Consider the following 228-residue polypeptide: Prolactin (228 aa).

The N-terminal stretch at Met-1–Ser-29 is a signal peptide. Cys-33 and Cys-40 form a disulfide bridge. Phosphoserine is present on residues Ser-55, Ser-63, and Ser-119. Intrachain disulfides connect Cys-87–Cys-203 and Cys-220–Cys-228.

This sequence belongs to the somatotropin/prolactin family. As to quaternary structure, interacts with PRLR.

The protein localises to the secreted. Functionally, prolactin acts primarily on the mammary gland by promoting lactation. The polypeptide is Prolactin (PRL) (Monodelphis domestica (Gray short-tailed opossum)).